A 213-amino-acid chain; its full sequence is Thymidylate kinase (213 aa).

Residue 11–18 (GGEGAGKT) participates in ATP binding.

Belongs to the thymidylate kinase family.

The enzyme catalyses dTMP + ATP = dTDP + ADP. In terms of biological role, phosphorylation of dTMP to form dTDP in both de novo and salvage pathways of dTTP synthesis. This Shouchella clausii (strain KSM-K16) (Alkalihalobacillus clausii) protein is Thymidylate kinase.